The chain runs to 146 residues: Gastrin-releasing peptide (146 aa).

The first 23 residues, 1-23, serve as a signal peptide directing secretion; the sequence is MRGREFPLVLLALVLCQAPRGPA. Methionine amide is present on M50. Positions 54 to 146 are excised as a propeptide; the sequence is STGESPYAYE…QHEGRIPQLN (93 aa). Residues 95-146 are disordered; the sequence is SHQPPQWEPLGIRQSTWDSKDGSNFKDMGPRLKVDGLSAPGSQHEGRIPQLN. Over residues 112–128 the composition is skewed to basic and acidic residues; it reads DSKDGSNFKDMGPRLKV.

This sequence belongs to the bombesin/neuromedin-B/ranatensin family.

The protein resides in the secreted. The protein localises to the cytoplasmic vesicle. It localises to the secretory vesicle lumen. It is found in the cell projection. Its subcellular location is the neuron projection. In terms of biological role, stimulates the release of gastrin and other gastrointestinal hormones. Contributes to the perception of prurient stimuli and to the transmission of itch signals in the spinal cord that promote scratching behavior. Contributes primarily to nonhistaminergic itch sensation. In one study, shown to act in the amygdala as part of an inhibitory network which inhibits memory specifically related to learned fear. In another study, shown to act on vasoactive intestinal peptide (VIP)-expressing cells in the auditory cortex, most likely via extrasynaptic diffusion from local and long-range sources, to mediate disinhibition of glutamatergic cells via VIP cell-specific GRPR signaling which leads to enhanced auditory fear memories. Contributes to the regulation of food intake. Inhibits voltage-gated sodium channels but enhances voltage-gated potassium channels in hippocampal neurons. Induces sighing by acting directly on the pre-Botzinger complex, a cluster of several thousand neurons in the ventrolateral medulla responsible for inspiration during respiratory activity. Induces an itch response through activation of receptors present on mast cells, triggering mast cell degranulation. The polypeptide is Gastrin-releasing peptide (GRP) (Sus scrofa (Pig)).